Reading from the N-terminus, the 228-residue chain is Elongation factor 1-beta (228 aa).

In terms of domain architecture, GST C-terminal spans Gly-2–Ser-90. The disordered stretch occupies residues Pro-70–Arg-122. Positions Glu-97–Glu-116 are enriched in acidic residues. At Ser-109 the chain carries Phosphoserine; by CK2.

This sequence belongs to the EF-1-beta/EF-1-delta family. In terms of assembly, EF-1 is composed of 4 subunits: alpha, beta (alpha subunit of the eEF1B subcomplex), delta (beta subunit of the eEF1B subcomplex), and gamma (gamma subunit of the eEF1B subcomplex). Interacts with elongation factor EEF1A1. Post-translationally, phosphorylation affects the GDP/GTP exchange rate.

Its function is as follows. Catalytic subunit of the guanine nucleotide exchange factor (GEF) (eEF1B subcomplex) of the eukaryotic elongation factor 1 complex (eEF1). Stimulates the exchange of GDP for GTP on elongation factor 1A (eEF1A), probably by displacing GDP from the nucleotide binding pocket in eEF1A. This Xenopus tropicalis (Western clawed frog) protein is Elongation factor 1-beta (eef1b).